The chain runs to 306 residues: Recombination-associated protein RdgC (306 aa).

This sequence belongs to the RdgC family.

The protein localises to the cytoplasm. It localises to the nucleoid. Its function is as follows. May be involved in recombination. The polypeptide is Recombination-associated protein RdgC (Pseudomonas fluorescens (strain SBW25)).